The chain runs to 178 residues: Putative metal-dependent hydrolase GTNG_0529 (178 aa).

The Zn(2+) site is built by His68, His161, and His165.

The protein belongs to the metal hydrolase YfiT family. Homodimer. Requires Zn(2+) as cofactor.

Its subcellular location is the cytoplasm. In terms of biological role, possible metal-dependent hydrolase. This Geobacillus thermodenitrificans (strain NG80-2) protein is Putative metal-dependent hydrolase GTNG_0529.